The chain runs to 256 residues: Type III pantothenate kinase (256 aa).

Position 7–14 (7–14 (DVGNTRLK)) interacts with ATP. Residues Tyr-96 and 103–106 (GADR) each bind substrate. Catalysis depends on Asp-105, which acts as the Proton acceptor. Residue Thr-133 coordinates ATP. Thr-183 serves as a coordination point for substrate.

It belongs to the type III pantothenate kinase family. As to quaternary structure, homodimer. It depends on NH4(+) as a cofactor. The cofactor is K(+).

It is found in the cytoplasm. The enzyme catalyses (R)-pantothenate + ATP = (R)-4'-phosphopantothenate + ADP + H(+). It functions in the pathway cofactor biosynthesis; coenzyme A biosynthesis; CoA from (R)-pantothenate: step 1/5. Catalyzes the phosphorylation of pantothenate (Pan), the first step in CoA biosynthesis. The chain is Type III pantothenate kinase from Verminephrobacter eiseniae (strain EF01-2).